The primary structure comprises 59 residues: DNA gyrase inhibitor YacG (59 aa).

Positions 9, 12, 27, and 31 each coordinate Zn(2+).

This sequence belongs to the DNA gyrase inhibitor YacG family. Interacts with GyrB. The cofactor is Zn(2+).

In terms of biological role, inhibits all the catalytic activities of DNA gyrase by preventing its interaction with DNA. Acts by binding directly to the C-terminal domain of GyrB, which probably disrupts DNA binding by the gyrase. The chain is DNA gyrase inhibitor YacG from Geotalea daltonii (strain DSM 22248 / JCM 15807 / FRC-32) (Geobacter daltonii).